The following is a 279-amino-acid chain: Undecaprenyl-diphosphatase (279 aa).

8 consecutive transmembrane segments (helical) span residues 2 to 22 (LIIELLKAIFFGIIEGITEWL), 44 to 64 (AFIEMFNIVIQLGAIIAVMLI), 85 to 105 (WQLWLKVVIACIPSILIAVPL), 113 to 133 (FYFMVPIAIALIVYGIAFIWI), 163 to 183 (VLSIVPGTSRSGATILGAIIL), 188 to 208 (TVAADFTFFLAIPTMFGYSGL), 223 to 243 (AQVLILLVASLTAFVVSLLAI), and 255 to 275 (FTIFGKYRIVLGSLLLIYSFF).

The protein belongs to the UppP family.

It is found in the cell membrane. The catalysed reaction is di-trans,octa-cis-undecaprenyl diphosphate + H2O = di-trans,octa-cis-undecaprenyl phosphate + phosphate + H(+). Its function is as follows. Catalyzes the dephosphorylation of undecaprenyl diphosphate (UPP). Confers resistance to bacitracin. The chain is Undecaprenyl-diphosphatase from Streptococcus pyogenes serotype M2 (strain MGAS10270).